A 436-amino-acid chain; its full sequence is Probable sodium/metabolite cotransporter BASS4, chloroplastic (436 aa).

Residues 1–47 constitute a chloroplast transit peptide; the sequence is MAIASTLASTQNPFLCLRQPPSPGNRSVVFRRCQDPCGRRWISRSIR. Transmembrane regions (helical) follow at residues 109–129, 131–151, 157–177, 195–215, 225–245, 257–277, 297–314, 328–348, and 403–423; these read FLPLALVSGVGLGFANPTLGC, ADKYSFTKISTCGIFIISGLT, IGAAVKGWPLGLFGLISILLL, LVTGLGIFCCMPTTLSSGVAL, LALAVTVASNLLGILTIPFWV, FPTDQLFRSLIVTLLIPLIIG, LFSKINAICLSLVPWIQV, VFLAAVGIGILLHLSLLAFNA, and PCVAAHLNQIMIDSVLVNLWL.

This sequence belongs to the bile acid:sodium symporter (BASS) (TC 2.A.28) family.

The protein resides in the membrane. It is found in the plastid. The protein localises to the chloroplast envelope. Its function is as follows. May function as sodium-coupled metabolite transporter across the chloroplast envelope. The chain is Probable sodium/metabolite cotransporter BASS4, chloroplastic (BASS4) from Arabidopsis thaliana (Mouse-ear cress).